Here is an 86-residue protein sequence, read N- to C-terminus: Small ribosomal subunit protein bS18 (86 aa).

It belongs to the bacterial ribosomal protein bS18 family. In terms of assembly, part of the 30S ribosomal subunit. Forms a tight heterodimer with protein bS6.

Binds as a heterodimer with protein bS6 to the central domain of the 16S rRNA, where it helps stabilize the platform of the 30S subunit. The protein is Small ribosomal subunit protein bS18 of Campylobacter jejuni subsp. jejuni serotype O:6 (strain 81116 / NCTC 11828).